Reading from the N-terminus, the 456-residue chain is Glutathione reductase (456 aa).

FAD is bound by residues Ser-14, Gly-15, Glu-34, Thr-41, Cys-42, and Lys-50. Ser-14 lines the glutathione pocket. A disulfide bridge links Cys-42 with Cys-47. Tyr-99 contacts glutathione. Gly-115 contacts FAD. Residues Ala-180, Ile-183, Glu-186, Arg-203, Arg-209, and Gly-267 each coordinate NADP(+). FAD is bound at residue Asp-308. Glu-315 contributes to the NADP(+) binding site. Thr-317 provides a ligand contact to FAD. Arg-325 lines the glutathione pocket. NADP(+) is bound at residue Val-348. Residue His-445 participates in FAD binding. Catalysis depends on His-445, which acts as the Proton acceptor.

It belongs to the class-I pyridine nucleotide-disulfide oxidoreductase family. In terms of assembly, homodimer. FAD is required as a cofactor.

The protein resides in the cytoplasm. The enzyme catalyses 2 glutathione + NADP(+) = glutathione disulfide + NADPH + H(+). Functionally, catalyzes the reduction of glutathione disulfide (GSSG) to reduced glutathione (GSH). Constitutes the major mechanism to maintain a high GSH:GSSG ratio in the cytosol. In Haemophilus influenzae (strain ATCC 51907 / DSM 11121 / KW20 / Rd), this protein is Glutathione reductase (gor).